Here is a 507-residue protein sequence, read N- to C-terminus: Tryptophan aminotransferase-related protein 2 (507 aa).

Residues 91–135 (PPPHHHHHDAGLATRSSDAAVHRRARTASSMAPSTGKPAVTTDSV) form a disordered region. Pyridoxal 5'-phosphate-binding positions include Tyr-169, 211–212 (ST), Asn-282, 304–307 (DLAY), 327–330 (TVSK), and Arg-338. N6-(pyridoxal phosphate)lysine is present on Lys-330.

This sequence belongs to the alliinase family. Pyridoxal 5'-phosphate serves as cofactor. As to expression, widely expressed.

The enzyme catalyses L-tryptophan + 2-oxoglutarate = indole-3-pyruvate + L-glutamate. Its pathway is plant hormone metabolism; auxin biosynthesis. Probable tryptophan aminotransferase involved in auxin (IAA) biosynthesis. Required for auxin production to initiate multiple change in growth in response to environmental and developmental cues. Functions upstream of YUCCA1 in auxin biosynthesis. Required for polar auxin transport. This Oryza sativa subsp. japonica (Rice) protein is Tryptophan aminotransferase-related protein 2.